Consider the following 209-residue polypeptide: Large ribosomal subunit protein uL3 (209 aa).

The residue at position 150 (Q150) is an N5-methylglutamine.

This sequence belongs to the universal ribosomal protein uL3 family. As to quaternary structure, part of the 50S ribosomal subunit. Forms a cluster with proteins L14 and L19. Methylated by PrmB.

Functionally, one of the primary rRNA binding proteins, it binds directly near the 3'-end of the 23S rRNA, where it nucleates assembly of the 50S subunit. The polypeptide is Large ribosomal subunit protein uL3 (Buchnera aphidicola subsp. Schizaphis graminum (strain Sg)).